The primary structure comprises 311 residues: Aspartate carbamoyltransferase catalytic subunit (311 aa).

The carbamoyl phosphate site is built by arginine 55 and threonine 56. L-aspartate is bound at residue lysine 85. Carbamoyl phosphate contacts are provided by arginine 106, histidine 135, and glutamine 138. L-aspartate-binding residues include arginine 168 and arginine 230. Carbamoyl phosphate contacts are provided by leucine 268 and proline 269.

It belongs to the aspartate/ornithine carbamoyltransferase superfamily. ATCase family. Heterododecamer (2C3:3R2) of six catalytic PyrB chains organized as two trimers (C3), and six regulatory PyrI chains organized as three dimers (R2).

The enzyme catalyses carbamoyl phosphate + L-aspartate = N-carbamoyl-L-aspartate + phosphate + H(+). Its pathway is pyrimidine metabolism; UMP biosynthesis via de novo pathway; (S)-dihydroorotate from bicarbonate: step 2/3. In terms of biological role, catalyzes the condensation of carbamoyl phosphate and aspartate to form carbamoyl aspartate and inorganic phosphate, the committed step in the de novo pyrimidine nucleotide biosynthesis pathway. The polypeptide is Aspartate carbamoyltransferase catalytic subunit (Yersinia pestis).